The sequence spans 161 residues: 3-isopropylmalate dehydratase small subunit (161 aa).

The protein belongs to the LeuD family. LeuD type 2 subfamily. As to quaternary structure, heterodimer of LeuC and LeuD.

It carries out the reaction (2R,3S)-3-isopropylmalate = (2S)-2-isopropylmalate. It participates in amino-acid biosynthesis; L-leucine biosynthesis; L-leucine from 3-methyl-2-oxobutanoate: step 2/4. In terms of biological role, catalyzes the isomerization between 2-isopropylmalate and 3-isopropylmalate, via the formation of 2-isopropylmaleate. The protein is 3-isopropylmalate dehydratase small subunit of Clostridium beijerinckii (strain ATCC 51743 / NCIMB 8052) (Clostridium acetobutylicum).